Here is a 49-residue protein sequence, read N- to C-terminus: Disintegrin echistatin-gamma (49 aa).

A Disintegrin domain is found at 1-47; that stretch reads DCASGPCCRDCKFLEEGTICNMARGDDMDDYCNGKTCDCPRNPHKWP. 4 disulfides stabilise this stretch: cysteine 2-cysteine 11, cysteine 7-cysteine 32, cysteine 8-cysteine 37, and cysteine 20-cysteine 39. The Cell attachment site motif lies at 24–26; the sequence is RGD.

The protein belongs to the venom metalloproteinase (M12B) family. P-II subfamily. P-IIa sub-subfamily. Monomer. As to expression, expressed by the venom gland.

Its subcellular location is the secreted. Its function is as follows. Has antiplatelet activities on guinea pig, followed by human, rabbit and rat platelet-rich plasma. The protein is Disintegrin echistatin-gamma of Echis pyramidum leakeyi (Leakey's carpet viper).